Here is a 178-residue protein sequence, read N- to C-terminus: Bifunctional protein PyrR (178 aa).

Residues 99–111 (VILVDDVLFTGRT) carry the PRPP-binding motif.

Belongs to the purine/pyrimidine phosphoribosyltransferase family. PyrR subfamily. In terms of assembly, homodimer and homohexamer; in equilibrium.

It carries out the reaction UMP + diphosphate = 5-phospho-alpha-D-ribose 1-diphosphate + uracil. Functionally, regulates transcriptional attenuation of the pyrimidine nucleotide (pyr) operon by binding in a uridine-dependent manner to specific sites on pyr mRNA. This disrupts an antiterminator hairpin in the RNA and favors formation of a downstream transcription terminator, leading to a reduced expression of downstream genes. In terms of biological role, also displays a weak uracil phosphoribosyltransferase activity which is not physiologically significant. This is Bifunctional protein PyrR from Ligilactobacillus salivarius (strain UCC118) (Lactobacillus salivarius).